We begin with the raw amino-acid sequence, 347 residues long: Glutamyl-Q tRNA(Asp) synthetase (347 aa).

L-glutamate contacts are provided by residues 31-35 (RFAPS) and E67. The 'HIGH' region signature appears at 34–44 (PSPTSALHLGN). Residues C121, C123, Y143, and C147 each contribute to the Zn(2+) site. L-glutamate is bound by residues Y203 and R221. The short motif at 259–263 (RLSKS) is the 'KMSKS' region element. K262 contributes to the ATP binding site.

This sequence belongs to the class-I aminoacyl-tRNA synthetase family. GluQ subfamily. Requires Zn(2+) as cofactor.

Catalyzes the tRNA-independent activation of glutamate in presence of ATP and the subsequent transfer of glutamate onto a tRNA(Asp). Glutamate is transferred on the 2-amino-5-(4,5-dihydroxy-2-cyclopenten-1-yl) moiety of the queuosine in the wobble position of the QUC anticodon. The polypeptide is Glutamyl-Q tRNA(Asp) synthetase (Cutibacterium acnes (strain DSM 16379 / KPA171202) (Propionibacterium acnes)).